Reading from the N-terminus, the 423-residue chain is TNF receptor-associated factor family protein DDB_G0277243 (423 aa).

Residues 20 to 66 form an RING-type; degenerate zinc finger; it reads CSICVDPVLNSLPLEQHQALSCKNGHLLCQACWGKQLALRKECCICK. 2 consecutive TRAF-type zinc fingers follow at residues 124–179 and 180–237; these read SHLR…NDMP and THIE…CYLS. In terms of domain architecture, MATH spans 287–411; the sequence is RYKGNWTIEN…DGKLTINIDV (125 aa).

This sequence belongs to the TNF receptor-associated factor family. A subfamily.

Its subcellular location is the cytoplasm. In terms of biological role, probable adapter protein and signal transducer that links members of the tumor necrosis factor receptor family to different signaling pathways by association with the receptor cytoplasmic domain and kinases. The protein is TNF receptor-associated factor family protein DDB_G0277243 of Dictyostelium discoideum (Social amoeba).